A 332-amino-acid polypeptide reads, in one-letter code: Glyceraldehyde-3-phosphate dehydrogenase 1 (332 aa).

NAD(+) is bound by residues Arg11–Ile12, Asp33, and Arg78. Residues Ser149–Thr151, Thr180, Thr209–Gly210, and Arg232 each bind D-glyceraldehyde 3-phosphate. Cys150 (nucleophile) is an active-site residue. Asn314 lines the NAD(+) pocket.

It belongs to the glyceraldehyde-3-phosphate dehydrogenase family. Homotetramer.

Its subcellular location is the cytoplasm. The catalysed reaction is D-glyceraldehyde 3-phosphate + phosphate + NAD(+) = (2R)-3-phospho-glyceroyl phosphate + NADH + H(+). It participates in carbohydrate degradation; glycolysis; pyruvate from D-glyceraldehyde 3-phosphate: step 1/5. In Candida glabrata (strain ATCC 2001 / BCRC 20586 / JCM 3761 / NBRC 0622 / NRRL Y-65 / CBS 138) (Yeast), this protein is Glyceraldehyde-3-phosphate dehydrogenase 1 (GPD1).